We begin with the raw amino-acid sequence, 154 residues long: 3-hydroxyacyl-[acyl-carrier-protein] dehydratase FabZ (154 aa).

Histidine 54 is an active-site residue.

The protein belongs to the thioester dehydratase family. FabZ subfamily.

It localises to the cytoplasm. It carries out the reaction a (3R)-hydroxyacyl-[ACP] = a (2E)-enoyl-[ACP] + H2O. Its function is as follows. Involved in unsaturated fatty acids biosynthesis. Catalyzes the dehydration of short chain beta-hydroxyacyl-ACPs and long chain saturated and unsaturated beta-hydroxyacyl-ACPs. The chain is 3-hydroxyacyl-[acyl-carrier-protein] dehydratase FabZ from Shewanella oneidensis (strain ATCC 700550 / JCM 31522 / CIP 106686 / LMG 19005 / NCIMB 14063 / MR-1).